Here is a 276-residue protein sequence, read N- to C-terminus: Probable endonuclease 4 (276 aa).

9 residues coordinate Zn(2+): H70, H108, E143, D176, H179, H210, D223, H225, and E255.

The protein belongs to the AP endonuclease 2 family. It depends on Zn(2+) as a cofactor.

It carries out the reaction Endonucleolytic cleavage to 5'-phosphooligonucleotide end-products.. Endonuclease IV plays a role in DNA repair. It cleaves phosphodiester bonds at apurinic or apyrimidinic (AP) sites, generating a 3'-hydroxyl group and a 5'-terminal sugar phosphate. This Mesomycoplasma hyopneumoniae (strain J / ATCC 25934 / NCTC 10110) (Mycoplasma hyopneumoniae) protein is Probable endonuclease 4.